The sequence spans 147 residues: MERTFVILKPNAVRRGLVGEILKRFEQRGIKIVGLKFLKMTREQAEKLYEPHKGKQFYDELLEFMLSGPIVAVILEAPRCLELVRHIVGATDPLKAEAGSIRGEFALTVTKNLIHASDSTDNFIRESSIFFSPSEIIDYYLDVQDDI.

ATP-binding residues include Lys9, Phe57, Arg85, Thr91, Arg102, and Asn112. Catalysis depends on His115, which acts as the Pros-phosphohistidine intermediate.

The protein belongs to the NDK family. Homotetramer. It depends on Mg(2+) as a cofactor.

It is found in the cytoplasm. The enzyme catalyses a 2'-deoxyribonucleoside 5'-diphosphate + ATP = a 2'-deoxyribonucleoside 5'-triphosphate + ADP. The catalysed reaction is a ribonucleoside 5'-diphosphate + ATP = a ribonucleoside 5'-triphosphate + ADP. Its function is as follows. Major role in the synthesis of nucleoside triphosphates other than ATP. The ATP gamma phosphate is transferred to the NDP beta phosphate via a ping-pong mechanism, using a phosphorylated active-site intermediate. This chain is Nucleoside diphosphate kinase, found in Fervidobacterium nodosum (strain ATCC 35602 / DSM 5306 / Rt17-B1).